The primary structure comprises 82 residues: Alpha-defensin 17 (82 aa).

Residues 1-8 form the signal peptide; it reads LLAFQVQA. The tract at residues 1 to 43 is disordered; the sequence is LLAFQVQADPIQNTDEETKTEEQPGEEDQAVSVSFGDPEGTSL. A propeptide spanning residues 9–47 is cleaved from the precursor; that stretch reads DPIQNTDEETKTEEQPGEEDQAVSVSFGDPEGTSLQEES. Disulfide bonds link Cys-53/Cys-81, Cys-55/Cys-70, and Cys-60/Cys-80.

The protein belongs to the alpha-defensin family.

The protein resides in the secreted. Functionally, probably contributes to the antimicrobial barrier function of the small bowel mucosa. This chain is Alpha-defensin 17 (Defa17), found in Mus musculus (Mouse).